Consider the following 433-residue polypeptide: Serine hydroxymethyltransferase (433 aa).

(6S)-5,6,7,8-tetrahydrofolate-binding positions include Leu-132 and Gly-136–Leu-138. At Lys-241 the chain carries N6-(pyridoxal phosphate)lysine.

It belongs to the SHMT family. As to quaternary structure, homodimer. Pyridoxal 5'-phosphate serves as cofactor.

The protein resides in the cytoplasm. It catalyses the reaction (6R)-5,10-methylene-5,6,7,8-tetrahydrofolate + glycine + H2O = (6S)-5,6,7,8-tetrahydrofolate + L-serine. The protein operates within one-carbon metabolism; tetrahydrofolate interconversion. It participates in amino-acid biosynthesis; glycine biosynthesis; glycine from L-serine: step 1/1. Catalyzes the reversible interconversion of serine and glycine with tetrahydrofolate (THF) serving as the one-carbon carrier. This reaction serves as the major source of one-carbon groups required for the biosynthesis of purines, thymidylate, methionine, and other important biomolecules. Also exhibits THF-independent aldolase activity toward beta-hydroxyamino acids, producing glycine and aldehydes, via a retro-aldol mechanism. The protein is Serine hydroxymethyltransferase of Afipia carboxidovorans (strain ATCC 49405 / DSM 1227 / KCTC 32145 / OM5) (Oligotropha carboxidovorans).